Here is an 870-residue protein sequence, read N- to C-terminus: MHEQYQPREIEAAAQSIWDAQKSFEVREQPGKDTFYCLSMFPYPSGKLHMGHVRNYTIGDVIARYQRMQGRNVLQPMGWDAFGMPAENAAMKNRVAPAKWTYENIAYMKSQLKSLGLGIDWSREVTTCKPDYYRWEQWLFTRLFEKGVIYRKNGTVNWDPVDQTVLANEQVIDGRGWRSGALVEKREIPMYYFRITAYAEELLQSLDSLPGWPEQVKTMQRNWIGKSYGADIVFDYDQASVGEAGQLRVYSTRPDTLMGATYVAVAAEHPLAQRAAANDPALAAFIAECKAGSVAEADMATMEKKGLATGQFVVHPLTGDRLPVFVANYVLWGYGEGAVMAVPAHDERDFEFANKYGLPIRQVYAAEGRDFSASEWQAWYADKEGLTTVDSGKYDGKSFTEAFDAIVADLEATGHGARKTQFRLRDWGISRQRYWGCPIPIIHCEACGDVPVPEEQLPVVLPEDVVPDGTGSPLAKMPEFYECACPKCGKPAKRETDTMDTFVESSWYYARYASPQYAGGMVDPQAADHWLPVDQYIGGIEHAILHLLYARFFHKLMRDEGLLSSDEPFENLLTQGMVVAETYYRTLENGGKDWFNPADVEVERDARAKVIGARLKSDGLPVEIGGTEKMSKSKNNGVDPQAMIDAYGADTCRLFMMFAAPPELSLEWSDAGVEGASRFLRRVWRLAHAHVGAGLPGTLDKARLSDAQKEIRRAIHLAIRQASQDVGQHHKFNTAIAQVMTLMNVLEKAPAADEQDRALLQEGLETVALLLAPITPHICHALWEALGKDGLIIDAAWPTVDETALVQDTLTLVVQVNGKLRGEIQVPAAASREEIEAAARANENVLRFTEGLAIRKVIVVPGKLVNIVAN.

The short motif at 42–52 (PYPSGKLHMGH) is the 'HIGH' region element. The short motif at 629–633 (KMSKS) is the 'KMSKS' region element. Lys632 contacts ATP.

This sequence belongs to the class-I aminoacyl-tRNA synthetase family.

The protein localises to the cytoplasm. The catalysed reaction is tRNA(Leu) + L-leucine + ATP = L-leucyl-tRNA(Leu) + AMP + diphosphate. The chain is Leucine--tRNA ligase from Azotobacter vinelandii (strain DJ / ATCC BAA-1303).